A 395-amino-acid chain; its full sequence is Dual specificity mitogen-activated protein kinase kinase 1 (395 aa).

The interval 1–24 is disordered; sequence MPKKKPTPIQLNPNPEGTAVNGTP. Polar residues predominate over residues 9–24; the sequence is IQLNPNPEGTAVNGTP. One can recognise a Protein kinase domain in the interval 68 to 363; sequence FEKVSELGAG…LKQLMVHSFI (296 aa). ATP-binding positions include 74 to 82 and Lys-97; that span reads LGAGNGGVV. The Proton acceptor role is filled by Asp-190. Residues Ser-218 and Ser-222 each carry the phosphoserine; by RAF modification. Residues 284–305 form a disordered region; the sequence is ASSELAPRPRPPGRPISSYGPD.

This sequence belongs to the protein kinase superfamily. STE Ser/Thr protein kinase family. MAP kinase kinase subfamily. Post-translationally, activated by phosphorylation on Ser/Thr catalyzed by MAP kinase kinase kinases (RAF or MOS). In terms of tissue distribution, expressed in the central nervous system, kidney, liver, intestine and the hematopoietic system.

Its subcellular location is the cytoplasm. The protein resides in the cytoskeleton. It is found in the microtubule organizing center. It localises to the centrosome. The protein localises to the spindle pole body. Its subcellular location is the nucleus. It carries out the reaction L-seryl-[protein] + ATP = O-phospho-L-seryl-[protein] + ADP + H(+). The enzyme catalyses L-threonyl-[protein] + ATP = O-phospho-L-threonyl-[protein] + ADP + H(+). It catalyses the reaction L-tyrosyl-[protein] + ATP = O-phospho-L-tyrosyl-[protein] + ADP + H(+). In terms of biological role, dual specificity protein kinase which acts as an essential component of the MAP kinase signal transduction pathway. Binding of extracellular ligands such as growth factors, cytokines and hormones to their cell-surface receptors activates the MAPK/ERK cascade, ultimately leading to phosphorylation of a threonine and a tyrosine residue in a Thr-Glu-Tyr sequence located in MAP kinases. Depending on the cellular context, this pathway mediates diverse biological functions such as cell growth, adhesion, survival and differentiation predominantly through the regulation of transcription, metabolism and cytoskeletal rearrangements. The protein is Dual specificity mitogen-activated protein kinase kinase 1 (map2k1) of Xenopus laevis (African clawed frog).